The chain runs to 1452 residues: ABC multidrug transporter A-1 (1452 aa).

Residues 1–20 form a disordered region; sequence MNESHEAGKNSSTNVEEREE. N-linked (GlcNAc...) asparagine glycosylation is found at Asn-2, Asn-10, Asn-228, Asn-287, and Asn-311. The region spanning 110–363 is the ABC transporter 1 domain; sequence LKTLSLARIA…FLQMGFVCPD (254 aa). The next 6 membrane-spanning stretches (helical) occupy residues 474–494, 508–528, 554–574, 583–603, 616–636, and 725–745; these read VTIS…SIFY, ALLF…MLTL, MIMD…VLYF, GAFF…SMFF, VLPF…FAIP, and IGVI…ATDF. Residues 802-1044 form the ABC transporter 2 domain; the sequence is FQWKDVCFDI…ILIDYFVRNG (243 aa). 838 to 845 contributes to the ATP binding site; sequence GVSGAGKT. 6 helical membrane passes run 1153 to 1173, 1183 to 1203, 1223 to 1243, 1271 to 1291, 1297 to 1317, and 1324 to 1344; these read ALCV…PNTI, IFML…HFVA, FLIA…VLMF, LMIW…IAAF, AGNL…VLAT, and FWIF…MLSV. Residues Asn-1350, Asn-1365, and Asn-1391 are each glycosylated (N-linked (GlcNAc...) asparagine). A helical transmembrane segment spans residues 1418–1438; the sequence is FGLMWVFIVFNIFAACSLYWW.

The protein belongs to the ABC transporter superfamily. ABCG family. PDR (TC 3.A.1.205) subfamily.

The protein resides in the membrane. ABC transporter that seems not to be involved in the efflux of toxic substances, at least not the classical compounds such as itraconazole, amphotericin B, voriconazole, posaconazole, ravuconazole, or echinocandins. The polypeptide is ABC multidrug transporter A-1 (Aspergillus fumigatus (strain ATCC MYA-4609 / CBS 101355 / FGSC A1100 / Af293) (Neosartorya fumigata)).